We begin with the raw amino-acid sequence, 167 residues long: Peptide deformylase (167 aa).

Residues Cys-91 and His-133 each contribute to the Fe cation site. Glu-134 is an active-site residue. Fe cation is bound at residue His-137.

The protein belongs to the polypeptide deformylase family. It depends on Fe(2+) as a cofactor.

It carries out the reaction N-terminal N-formyl-L-methionyl-[peptide] + H2O = N-terminal L-methionyl-[peptide] + formate. In terms of biological role, removes the formyl group from the N-terminal Met of newly synthesized proteins. Requires at least a dipeptide for an efficient rate of reaction. N-terminal L-methionine is a prerequisite for activity but the enzyme has broad specificity at other positions. The protein is Peptide deformylase of Pseudoalteromonas translucida (strain TAC 125).